A 314-amino-acid chain; its full sequence is Ketimine reductase mu-crystallin (314 aa).

R47 provides a ligand contact to 3,3',5-triiodo-L-thyronine. NADPH is bound by residues D82, H92, R119, A144, V146, Q147, N168, R169, T170, N173, T205, L206, V226, and A228. E257 contacts 3,3',5-triiodo-L-thyronine. An NADPH-binding site is contributed by S292.

This sequence belongs to the ornithine cyclodeaminase/mu-crystallin family. Homodimer. Binds the thyroid hormone triiodothyronine (T3); T3 binding inhibits enzymatic activity. As to expression, expressed in neural tissues, muscle and kidney. Expressed in the inner ear.

It is found in the cytoplasm. The enzyme catalyses L-pipecolate + NADP(+) = Delta(1)-piperideine-2-carboxylate + NADPH + H(+). The catalysed reaction is L-pipecolate + NAD(+) = Delta(1)-piperideine-2-carboxylate + NADH + H(+). It catalyses the reaction L-proline + NADP(+) = 1-pyrroline-2-carboxylate + NADPH + H(+). It carries out the reaction L-proline + NAD(+) = 1-pyrroline-2-carboxylate + NADH + H(+). The enzyme catalyses (3R)-1,4-thiomorpholine-3-carboxylate + NAD(+) = 3,4-dehydrothiomorpholine-3-carboxylate + NADH + 2 H(+). The catalysed reaction is (3R)-1,4-thiomorpholine-3-carboxylate + NADP(+) = 3,4-dehydrothiomorpholine-3-carboxylate + NADPH + 2 H(+). It catalyses the reaction (S)-cystathionine ketimine + NADH + 2 H(+) = (3R,5S)-2,3,5,6,7-pentahydro-1,4-thiazepine-3,5-dicarboxylate + NAD(+). It carries out the reaction (S)-cystathionine ketimine + NADPH + 2 H(+) = (3R,5S)-2,3,5,6,7-pentahydro-1,4-thiazepine-3,5-dicarboxylate + NADP(+). The enzyme catalyses (R)-lanthionine ketimine + NADPH + 2 H(+) = (3R,5R)-1,4-thiomorpholine-3,5-dicarboxylate + NADP(+). The catalysed reaction is Delta(2)-thiazoline-2-carboxylate + NADPH + 2 H(+) = L-thiazolidine-2-carboxylate + NADP(+). With respect to regulation, inhibited by thyroid hormones triiodothyronine (T3) and thyroxine (T4). Functionally, catalyzes the NAD(P)H-dependent reduction of imine double bonds of a number of cyclic ketimine substrates, including sulfur-containing cyclic ketimines. Under physiological conditions, it efficiently catalyzes delta(1)-piperideine-2-carboxylate (P2C) and delta(1)-pyrroline-2-carboxylate (Pyr2C) reduction, suggesting a central role in lysine and glutamate metabolism. Additional substrates are delta(2)-thiazoline-2-carboxylate (T2C), 3,4-dehydrothiomorpholine-3-carboxylate (AECK), and (R)-lanthionine ketimine (LK) that is reduced at very low rate compared to other substrates. Also catalyzes the NAD(P)H-dependent reduction of (S)-cystathionine ketimine (CysK). The chain is Ketimine reductase mu-crystallin from Homo sapiens (Human).